The sequence spans 494 residues: UPF0371 protein STER_1332 (494 aa).

Belongs to the UPF0371 family.

This chain is UPF0371 protein STER_1332, found in Streptococcus thermophilus (strain ATCC BAA-491 / LMD-9).